The chain runs to 483 residues: Trigger factor (483 aa).

The PPIase FKBP-type domain occupies 166-251 (TDTVNIDYVG…INDVFTKEKP (86 aa)). The segment covering 435–460 (GEEPKLSTTKKVVEPTEEKTRKDSKM) has biased composition (basic and acidic residues). Residues 435–483 (GEEPKLSTTKKVVEPTEEKTRKDSKMSTKKPAAKPAAKPAAATKKPVKK) form a disordered region. The segment covering 467–483 (AKPAAKPAAATKKPVKK) has biased composition (low complexity).

This sequence belongs to the FKBP-type PPIase family. Tig subfamily.

The protein localises to the cytoplasm. It carries out the reaction [protein]-peptidylproline (omega=180) = [protein]-peptidylproline (omega=0). Functionally, involved in protein export. Acts as a chaperone by maintaining the newly synthesized protein in an open conformation. Functions as a peptidyl-prolyl cis-trans isomerase. This chain is Trigger factor, found in Mycoplasma mobile (strain ATCC 43663 / 163K / NCTC 11711) (Mesomycoplasma mobile).